The sequence spans 125 residues: Interleukin-6 (125 aa).

Cysteines 16 and 26 form a disulfide.

Belongs to the IL-6 superfamily. In terms of assembly, component of a hexamer of two molecules each of IL6, IL6R and IL6ST; first binds to IL6R to associate with the signaling subunit IL6ST. Interacts with IL6R (via the N-terminal ectodomain); this interaction may be affected by IL6R-binding with SORL1, hence decreasing IL6 cis signaling. Interacts with SORL1 (via the N-terminal ectodomain); this interaction leads to IL6 internalization and lysosomal degradation. May form a trimeric complex with the soluble SORL1 ectodomain and soluble IL6R receptor; this interaction might stabilize circulating IL6, hence promoting IL6 trans signaling.

It localises to the secreted. Its function is as follows. Cytokine with a wide variety of biological functions in immunity, tissue regeneration, and metabolism. Binds to IL6R, then the complex associates to the signaling subunit IL6ST/gp130 to trigger the intracellular IL6-signaling pathway. The interaction with the membrane-bound IL6R and IL6ST stimulates 'classic signaling', whereas the binding of IL6 and soluble IL6R to IL6ST stimulates 'trans-signaling'. Alternatively, 'cluster signaling' occurs when membrane-bound IL6:IL6R complexes on transmitter cells activate IL6ST receptors on neighboring receiver cells. In terms of biological role, IL6 is a potent inducer of the acute phase response. Rapid production of IL6 contributes to host defense during infection and tissue injury, but excessive IL6 synthesis is involved in disease pathology. In the innate immune response, is synthesized by myeloid cells, such as macrophages and dendritic cells, upon recognition of pathogens through toll-like receptors (TLRs) at the site of infection or tissue injury. In the adaptive immune response, is required for the differentiation of B cells into immunoglobulin-secreting cells. Plays a major role in the differentiation of CD4(+) T cell subsets. Essential factor for the development of T follicular helper (Tfh) cells that are required for the induction of germinal-center formation. Required to drive naive CD4(+) T cells to the Th17 lineage. Also required for proliferation of myeloma cells and the survival of plasmablast cells. Acts as an essential factor in bone homeostasis and on vessels directly or indirectly by induction of VEGF, resulting in increased angiogenesis activity and vascular permeability. Induces, through 'trans-signaling' and synergistically with IL1B and TNF, the production of VEGF. Involved in metabolic controls, is discharged into the bloodstream after muscle contraction increasing lipolysis and improving insulin resistance. 'Trans-signaling' in central nervous system also regulates energy and glucose homeostasis. Mediates, through GLP-1, crosstalk between insulin-sensitive tissues, intestinal L cells and pancreatic islets to adapt to changes in insulin demand. Also acts as a myokine. Plays a protective role during liver injury, being required for maintenance of tissue regeneration. Also has a pivotal role in iron metabolism by regulating HAMP/hepcidin expression upon inflammation or bacterial infection. Through activation of IL6ST-YAP-NOTCH pathway, induces inflammation-induced epithelial regeneration. In Neovison vison (American mink), this protein is Interleukin-6 (IL6).